Reading from the N-terminus, the 490-residue chain is Transmembrane protein 185-like (490 aa).

A compositionally biased stretch (low complexity) spans 1-31 (MIENENTSLLSTSSSSTSSSPNNANSPSSLN). 2 disordered regions span residues 1–151 (MIEN…SKYK) and 455–490 (NMINNQDSSESESDDETEVSFKDREDEESEKLISNL). The segment covering 47-59 (TSGNNSPSAQITK) has biased composition (polar residues). Composition is skewed to low complexity over residues 66 to 80 (SNNSSRNSSRPNSRS) and 89 to 108 (NNNNNNNNNNNNNNNNNNIN). Polar residues predominate over residues 109-125 (KHNSIVYNKSNNKLNSI). Positions 133–145 (QGGGGGNGNGNGN) are enriched in gly residues. A compositionally biased stretch (acidic residues) spans 463-472 (SESESDDETE).

It belongs to the TMEM185 family.

The protein is Transmembrane protein 185-like of Dictyostelium discoideum (Social amoeba).